We begin with the raw amino-acid sequence, 119 residues long: Dihydroneopterin aldolase (119 aa).

Residues Glu-21, Tyr-53, and 72-73 each bind substrate; that span reads VE. Catalysis depends on Lys-98, which acts as the Proton donor/acceptor.

Belongs to the DHNA family.

It carries out the reaction 7,8-dihydroneopterin = 6-hydroxymethyl-7,8-dihydropterin + glycolaldehyde. It functions in the pathway cofactor biosynthesis; tetrahydrofolate biosynthesis; 2-amino-4-hydroxy-6-hydroxymethyl-7,8-dihydropteridine diphosphate from 7,8-dihydroneopterin triphosphate: step 3/4. Functionally, catalyzes the conversion of 7,8-dihydroneopterin to 6-hydroxymethyl-7,8-dihydropterin. The polypeptide is Dihydroneopterin aldolase (folB) (Streptomyces coelicolor (strain ATCC BAA-471 / A3(2) / M145)).